The sequence spans 445 residues: UDP-glucuronic acid decarboxylase 2 (445 aa).

Ala-2 carries the N-acetylalanine modification. Residues 2 to 43 (ASELINRRHETDQPTADAYYPKPIKPWFTVTRPMRYMLREQR) are Cytoplasmic-facing. Residues 44 to 64 (LIFVLVGIAIATLVFTIFPRS) form a helical; Signal-anchor for type II membrane protein membrane-spanning segment. Over 65–445 (TQSTPYSDPF…AATTTKTTSA (381 aa)) the chain is Lumenal. 149–174 (DNFFTGRKENVMHHFSNPNFEMIRHD) is a binding site for NAD(+). Arg-258 serves as a coordination point for substrate. Tyr-261 functions as the Proton acceptor in the catalytic mechanism. Position 261–265 (261–265 (YDEGK)) interacts with NAD(+). Asn-290 lines the substrate pocket. Arg-302 provides a ligand contact to NAD(+). Substrate-binding positions include 303–307 (VVSNF), 320–327 (YGDGKQTR), and 387–391 (DPHKR).

It belongs to the NAD(P)-dependent epimerase/dehydratase family. UDP-glucuronic acid decarboxylase subfamily. As to quaternary structure, homodimer. NAD(+) is required as a cofactor. As to expression, ubiquitous.

The protein resides in the golgi apparatus. It is found in the golgi stack membrane. The enzyme catalyses UDP-alpha-D-glucuronate + H(+) = UDP-alpha-D-xylose + CO2. It functions in the pathway nucleotide-sugar biosynthesis; UDP-alpha-D-xylose biosynthesis; UDP-alpha-D-xylose from UDP-alpha-D-glucuronate: step 1/1. Catalyzes the NAD-dependent decarboxylation of UDP-glucuronic acid to UDP-xylose. Necessary for the biosynthesis of the core tetrasaccharide in glycosaminoglycan biosynthesis. In Arabidopsis thaliana (Mouse-ear cress), this protein is UDP-glucuronic acid decarboxylase 2 (UXS2).